A 550-amino-acid chain; its full sequence is Chaperonin GroEL (550 aa).

Residues 30 to 33 (TLGP), Lys-51, 87 to 91 (DGTTT), Gly-415, and Asp-496 each bind ATP.

The protein belongs to the chaperonin (HSP60) family. As to quaternary structure, forms a cylinder of 14 subunits composed of two heptameric rings stacked back-to-back. Interacts with the co-chaperonin GroES.

Its subcellular location is the cytoplasm. It carries out the reaction ATP + H2O + a folded polypeptide = ADP + phosphate + an unfolded polypeptide.. Together with its co-chaperonin GroES, plays an essential role in assisting protein folding. The GroEL-GroES system forms a nano-cage that allows encapsulation of the non-native substrate proteins and provides a physical environment optimized to promote and accelerate protein folding. The sequence is that of Chaperonin GroEL from Rickettsia bellii (strain OSU 85-389).